Consider the following 117-residue polypeptide: MPKDFSRTLRVADQVQRELASLIQNEIMDPRIGMITLTGVEVTRDYTYAKVFYTTLGGNENAQLAEEGLKRAAGFLRSQLAGKIRLRIIPKLQFVYDESIERGIKLSRLIDEAVGKT.

It belongs to the RbfA family. Monomer. Binds 30S ribosomal subunits, but not 50S ribosomal subunits or 70S ribosomes.

The protein localises to the cytoplasm. Its function is as follows. One of several proteins that assist in the late maturation steps of the functional core of the 30S ribosomal subunit. Associates with free 30S ribosomal subunits (but not with 30S subunits that are part of 70S ribosomes or polysomes). Required for efficient processing of 16S rRNA. May interact with the 5'-terminal helix region of 16S rRNA. The chain is Ribosome-binding factor A from Nitrosomonas eutropha (strain DSM 101675 / C91 / Nm57).